A 1955-amino-acid polypeptide reads, in one-letter code: MFRQFYLWTCLASGIILGSLFEICLGQYDDDCKLARGGPPATIVAIDEESRNGTILVDNMLIKGTAGGPDPTIELSLKDNVDYWVLMDPVKQMLFLNSTGRVLDRDPPMNIHSIVVQVQCINKKVGTIIYHEVRIVVRDRNDNSPTFKHESYYATVNELTPVGTTIFTGFSGDNGATDIDDGPNGQIEYVIQYNPDDPTSNDTFEIPLMLTGNIVLRKRLNYEDKTRYFVIIQANDRAQNLNERRTTTTTLTVDVLDGDDLGPMFLPCVLVPNTRDCRPLTYQAAIPELRTPEELNPIIVTPPIQAIDQDRNIQPPSDRPGILYSILVGTPEDYPRFFHMHPRTAELSLLEPVNRDFHQKFDLVIKAEQDNGHPLPAFAGLHIEILDENNQSPYFTMPSYQGYILESAPVGATISDSLNLTSPLRIVALDKDIEDTKDPELHLFLNDYTSVFTVTQTGITRYLTLLQPVDREEQQTYTFSITAFDGVQESEPVIVNIQVMDANDNTPTFPEISYDVYVYTDMRPGDSVIQLTAVDADEGSNGEITYEILVGAQGDFIINKTTGLITIAPGVEMIVGRTYALTVQAADNAPPAERRNSICTVYIEVLPPNNQSPPRFPQLMYSLEISEAMRVGAVLLNLQATDREGDSITYAIENGDPQRVFNLSETTGILTLGKALDRESTDRYILIITASDGRPDGTSTATVNIVVTDVNDNAPVFDPYLPRNLSVVEEEANAFVGQVKATDPDAGINGQVHYSLGNFNNLFRITSNGSIYTAVKLNREVRDYYELVVVATDGAVHPRHSTLTLAIKVLDIDDNSPVFTNSTYTVLVEENLPAGTTILQIEAKDVDLGANVSYRIRSPEVKHFFALHPFTGELSLLRSLDYEAFPDQEASITFLVEAFDIYGTMPPGIATVTVIVKDMNDYPPVFSKRIYKGMVAPDAVKGTPITTVYAEDADPPGLPASRVRYRVDDVQFPYPASIFEVEEDSGRVITRVNLNEEPTTIFKLVVVAFDDGEPVMSSSATVKILVLHPGEIPRFTQEEYRPPPVSELATKGTMVGVISAAAINQSIVYSIVSGNEEDTFGINNITGVIYVNGPLDYETRTSYVLRVQADSLEVVLANLRVPSKSNTAKVYIEIQDENNHPPVFQKKFYIGGVSEDARMFTSVLRVKATDKDTGNYSVMAYRLIIPPIKEGKEGFVVETYTGLIKTAMLFHNMRRSYFKFQVIATDDYGKGLSGKADVLVSVVNQLDMQVIVSNVPPTLVEKKIEDLTEILDRYVQEQIPGAKVVVESIGARRHGDAFSLEDYTKCDLTVYAIDPQTNRAIDRNELFKFLDGKLLDINKDFQPYYGEGGRILEIRTPEAVTSIKKRGESLGYTEGALLALAFIIILCCIPAILVVLVSYRQFKVRQAECTKTARIQAALPAAKPAVPAPAPVAAPPPPPPPPPGAHLYEELGDSSILFLLYHFQQSRGNNSVSEDRKHQQVVMPFSSNTIEAHKSAHVDGSLKSNKLKSARKFTFLSDEDDLSAHNPLYKENISQVSTNSDISQRTDFVDPFSPKIQAKSKSLRGPREKIQRLWSQSVSLPRRLMRKVPNRPEIIDLQQWQGTRQKAENENTGICTNKRGSSNPLLTTEEANLTEKEEIRQGETLMIEGTEQLKSLSSDSSFCFPRPHFSFSTLPTVSRTVELKSEPNVISSPAECSLELSPSRPCVLHSSLSRRETPICMLPIETERNIFENFAHPPNISPSACPLPPPPPISPPSPPPAPAPLAPPPDISPFSLFCPPPSPPSIPLPLPPPTFFPLSVSTSGPPTPPLLPPFPTPLPPPPPSIPCPPPPSASFLSTECVCITGVKCTTNLMPAEKIKSSMTQLSTTTVCKTDPQREPKGILRHVKNLAELEKSVANMYSQIEKNYLRTNVSELQTMCPSEVTNMEITSEQNKGSLNNIVEGTEKQSHSQSTSL.

A signal peptide spans 1-26 (MFRQFYLWTCLASGIILGSLFEICLG). Topologically, residues 27–1376 (QYDDDCKLAR…GESLGYTEGA (1350 aa)) are extracellular. A disulfide bridge connects residues Cys-32 and Cys-120. Cadherin domains are found at residues 40–147 (PATI…SPTF), 148–265 (KHES…GPMF), 278–395 (RPLT…SPYF), 396–509 (TMPS…TPTF), 510–616 (PEIS…PPRF), 617–717 (PQLM…APVF), 719–819 (PYLP…SPVF), 820–926 (TNST…PPVF), 927–1035 (SKRI…IPRF), 1037–1144 (QEEY…PPVF), and 1145–1259 (QKKF…PPTL). N-linked (GlcNAc...) asparagine glycans are attached at residues Asn-52, Asn-97, and Asn-201. 7 N-linked (GlcNAc...) asparagine glycosylation sites follow: Asn-419, Asn-559, Asn-662, Asn-724, Asn-768, Asn-821, and Asn-851. N-linked (GlcNAc...) asparagine glycosylation is found at Asn-1064, Asn-1084, and Asn-1175. The chain crosses the membrane as a helical span at residues 1377 to 1397 (LLALAFIIILCCIPAILVVLV). Residues 1398–1955 (SYRQFKVRQA…KQSHSQSTSL (558 aa)) lie on the Cytoplasmic side of the membrane. Residues 1426-1444 (VPAPAPVAAPPPPPPPPPG) show a composition bias toward pro residues. 4 disordered regions span residues 1426–1446 (VPAPAPVAAPPPPPPPPPGAH), 1601–1623 (QGTRQKAENENTGICTNKRGSSN), 1745–1766 (CPLPPPPPISPPSPPPAPAPLA), and 1928–1955 (ITSEQNKGSLNNIVEGTEKQSHSQSTSL). The segment covering 1928 to 1941 (ITSEQNKGSLNNIV) has biased composition (polar residues).

As to quaternary structure, antiparallel heterodimer with CDH23. Found in a complex with TMIE and LHFPL5. Interacts with LHFPL5/TMHS; this interaction is required for efficient localization to hair bundles. Interacts with MYO7A. Interacts with USH1G; this interaction may recruit USH1G to the plasma membrane. Interacts with TOMT. Isoforms CD1 and CD3 interact with TMC1 (via N-terminus) and TMC2 (via N-terminus). In terms of tissue distribution, expressed in brain, lung, kidney, spleen and testis. Found also in the inner and outer synaptic layers, and the nerve fiber layer in adult and fetal retinas. Found in the supporting cells, outer sulcus cells and spiral ganglion of fetal cochlea. Expressed in cytotoxic tumor-derived T- and NK-cell lines as well as biopsies of nasal NK/T-cell lymphomas. Not detected in normal or in vitro activated peripheral blood cells, CD4 or CD8 lymphocytes or NK cells. Isoform 3 is expressed in brain, heart, cerebellum and kidney. CD1 isoforms, such as isoform 1, have a limited pattern of expression and is detected in testis, retina and cochlea. CD2 isoforms, such as isoforms 4 and 5, are expressed in heart, kidney, thymus, spleen, testis, retina and cochlea. CD3 isoforms, such as isoform 6, are widely expressed.

The protein localises to the cell membrane. It is found in the secreted. Functionally, calcium-dependent cell-adhesion protein. Essential for maintenance of normal retinal and cochlear function. This Homo sapiens (Human) protein is Protocadherin-15 (PCDH15).